Here is a 342-residue protein sequence, read N- to C-terminus: DNA primase small subunit PriS (342 aa).

Active-site residues include Asp97, Asp99, and Asp276.

Belongs to the eukaryotic-type primase small subunit family. As to quaternary structure, heterodimer of a small subunit (PriS) and a large subunit (PriL). Mg(2+) is required as a cofactor. The cofactor is Mn(2+).

In terms of biological role, catalytic subunit of DNA primase, an RNA polymerase that catalyzes the synthesis of short RNA molecules used as primers for DNA polymerase during DNA replication. The small subunit contains the primase catalytic core and has DNA synthesis activity on its own. Binding to the large subunit stabilizes and modulates the activity, increasing the rate of DNA synthesis while decreasing the length of the DNA fragments, and conferring RNA synthesis capability. The DNA polymerase activity may enable DNA primase to also catalyze primer extension after primer synthesis. May also play a role in DNA repair. The sequence is that of DNA primase small subunit PriS from Thermococcus sibiricus (strain DSM 12597 / MM 739).